Reading from the N-terminus, the 179-residue chain is Cell division protein ZapC (179 aa).

The protein belongs to the ZapC family. As to quaternary structure, interacts directly with FtsZ.

It localises to the cytoplasm. In terms of biological role, contributes to the efficiency of the cell division process by stabilizing the polymeric form of the cell division protein FtsZ. Acts by promoting interactions between FtsZ protofilaments and suppressing the GTPase activity of FtsZ. The polypeptide is Cell division protein ZapC (Aliivibrio salmonicida (strain LFI1238) (Vibrio salmonicida (strain LFI1238))).